The chain runs to 171 residues: Co-chaperone protein HscB (171 aa).

The J domain maps to D2–L74.

Belongs to the HscB family. In terms of assembly, interacts with HscA and stimulates its ATPase activity. Interacts with IscU.

In terms of biological role, co-chaperone involved in the maturation of iron-sulfur cluster-containing proteins. Seems to help targeting proteins to be folded toward HscA. In Enterobacter sp. (strain 638), this protein is Co-chaperone protein HscB.